Consider the following 372-residue polypeptide: MELEGQWWRGQLAADIHQALRYKELKLPSYKGQSPQLSLRRYFADLIAIVSNRFTLCPSARHLAVYLLDLFMDRYDISIQQLHLVALSCLLLASKFEEKEDSVPKLEQLNSLGCMTNMNLVLTKQNLLHMELLLLETFQWNLCLPTAAHFIEYYLSEAVHETDLHDGWPMICLEKTKLYMAKYADYFLEVSLQVAAACVASSRIILRLSPTWPTRLHRLTAYSWDFLVQCIERLLIAHDNDVKEANKQRGQAGPQSAQLSVFQTASQPSRPVHFQQPQYLHQTHQTSLQYRHPTSEQPSCQQIVSTTHTSSYTLQTCPAGFQTSVQGLGHMQTGVGMSLAIPVEVKPCLSVSYNRSYQINEHYPCITPCFER.

The 129-residue stretch at 15–143 folds into the Cyclin N-terminal domain; the sequence is DIHQALRYKE…LLETFQWNLC (129 aa).

The protein belongs to the cyclin family.

The polypeptide is Cyclin-J (CCNJ) (Homo sapiens (Human)).